Reading from the N-terminus, the 272-residue chain is DNA repair protein RecO (272 aa).

Belongs to the RecO family.

Involved in DNA repair and RecF pathway recombination. This Limosilactobacillus fermentum (strain NBRC 3956 / LMG 18251) (Lactobacillus fermentum) protein is DNA repair protein RecO.